Consider the following 697-residue polypeptide: Histone-lysine N-methyltransferase SETDB2 (697 aa).

Residues 172 to 242 (LKKENPLNLP…DNFSFSTQVQ (71 aa)) form the MBD domain. The Pre-SET domain occupies 304 to 378 (KCCSCTDGCL…LCQNRVVQHG (75 aa)). Zn(2+) is bound by residues C306, C308, C312, C318, C320, C359, C363, C365, and C370. The 292-residue stretch at 381-672 (LRLQVFKTDT…AGTELTWDYN (292 aa)) folds into the SET domain. 391–393 (KGW) serves as a coordination point for S-adenosyl-L-methionine. 2 disordered regions span residues 438-461 (KEDN…HSDS) and 529-605 (VHNS…STSP). A compositionally biased stretch (low complexity) spans 565–581 (SGYVSEESSSSVISGGH). Residues R626 and 629–630 (NH) contribute to the S-adenosyl-L-methionine site. Zn(2+) contacts are provided by C632, C685, C687, and C692.

This sequence belongs to the class V-like SAM-binding methyltransferase superfamily.

It is found in the nucleus. Its subcellular location is the chromosome. It carries out the reaction N(6),N(6)-dimethyl-L-lysyl(9)-[histone H3] + S-adenosyl-L-methionine = N(6),N(6),N(6)-trimethyl-L-lysyl(9)-[histone H3] + S-adenosyl-L-homocysteine + H(+). In terms of biological role, histone methyltransferase involved in left-right axis specification in early development and mitosis. Specifically trimethylates 'Lys-9' of histone H3 (H3K9me3). H3K9me3 represents a specific tag for epigenetic transcriptional repression by recruiting HP1 (CBX1, CBX3 and/or CBX5) proteins to methylated histones. Contributes to H3K9me3 in both the interspersed repetitive elements and centromere-associated repeats. Plays a role in chromosome condensation and segregation during mitosis. The protein is Histone-lysine N-methyltransferase SETDB2 (setdb2) of Xenopus tropicalis (Western clawed frog).